The following is a 750-amino-acid chain: Retron Eco8 OLD nuclease (750 aa).

The segment at 1–173 is ATPase domain N-terminus; sequence MTIESIRVKN…IDLYDWNPIW (173 aa). Position 33–37 (33–37) interacts with ATP; it reads NVGKS. The dimerization domain stretch occupies residues 174-260; that stretch reads KLISNLNSFN…TQSDGTNSNK (87 aa). An ATPase domain C-terminus region spans residues 261-390; it reads FLETLLHLLI…FSDNEARLFF (130 aa). The interval 391–704 is toprim domain; it reads SEYIVFVEGA…SGWVTTFLNY (314 aa). Positions 398, 402, 450, 452, 623, and 641 each coordinate a divalent metal cation.

It belongs to the class 1 OLD nuclease family. In terms of assembly, homodimer. It depends on a divalent metal cation as a cofactor.

Probable nuclease member of antiviral defense system retron Eco8, composed of an reverse transcriptase (RT), this nuclease and a non-coding RNA (ncRNA) encoded between them. Expression of retron Eco8 confers protection against bacteriophages T4, T6, T7 and SECphi4, SECphi6 and SECphi18. At multiplicity of infection (MOI) of 0.02 cultures slow growth when infected with SECphi4 but do not collapse, at MOI 2 cultures collapse. When the retron is cloned in another E.coli strain synthesizes msDNA (a branched RNA linked by a 2',5'-phosphodiester bond to a single-stranded DNA). The retron transcript serves as primer and template to the reaction, and codes for the RT. The protein is Retron Eco8 OLD nuclease of Escherichia coli.